A 310-amino-acid polypeptide reads, in one-letter code: MSKKIINEVIDILEDKKYTYTMIEYPEHNRKSVDIVLNSKEPTLIRVSEDKVTKEEISDLKKIAVSTLTASLVVTNEEEEDIVSVKADNVFAVSPEGFKKVINGEKIFLYRTRGGIFIKIRNYILKHKREEMGYSIGDVAKFLGVSRKAIYDYEKGDSDVSLEVAEKLIDLFGDDIIGDVIWDSIKGKKEVIEEDITEFSPESFKSKLIYKLKENGLNILSLKLTAADLIVKDNENNRYLVTIENKDYNKSMKKFYEAKKLSSYTKSELLIIIRTSKMLKECEDLGYKTYEENDIHSLIDEIKGSNGRQS.

Positions 125 to 180 (LKHKREEMGYSIGDVAKFLGVSRKAIYDYEKGDSDVSLEVAEKLIDLFGDDIIGDV) constitute an HTH cro/C1-type domain. A DNA-binding region (H-T-H motif) is located at residues 136–155 (IGDVAKFLGVSRKAIYDYEK).

The polypeptide is Putative HTH-type transcriptional regulatory protein YN1551_1579 (Saccharolobus islandicus (strain Y.N.15.51 / Yellowstone #2) (Sulfolobus islandicus)).